Consider the following 383-residue polypeptide: Adaptive-response sensory kinase SasA (383 aa).

Positions 152–365 constitute a Histidine kinase domain; it reads MVAHELRTPL…CFTFTVPIWQ (214 aa). At H155 the chain carries Phosphohistidine; by autocatalysis.

In terms of assembly, homooligomerizes. Interacts with KaiC. Participates in the KaiABC clock complex, whose core is composed of a KaiC homohexamer, 6 KaiB and up to 6 KaiA dimers. SasA and KaiB(fs) compete to bind to KaiC.

It catalyses the reaction ATP + protein L-histidine = ADP + protein N-phospho-L-histidine.. Member of the two-component regulatory system SasA/RpaA involved in genome-wide circadian gene expression. One of several clock output pathways. Participates in the Kai clock protein complex, the main circadian regulator in cyanobacteria, via its interaction with KaiC. KaiC enhances the autophosphorylation activity of SasA, which then transfers its phosphate group to RpaA to activate it. In addition to its output function, recruits fold-shifted KaiB (KaiB(fs)) to KaiC to cooperatively form the KaiB(6):KaiC(6) complex (independent of SasA kinase activity). Required for robustness of the circadian rhythm of gene expression and is involved in clock output, also required for adaptation to light/dark cycles. In Synechococcus sp. (strain CC9902), this protein is Adaptive-response sensory kinase SasA.